Consider the following 149-residue polypeptide: Large ribosomal subunit protein bL9 (149 aa).

It belongs to the bacterial ribosomal protein bL9 family.

Functionally, binds to the 23S rRNA. The protein is Large ribosomal subunit protein bL9 of Desulforamulus reducens (strain ATCC BAA-1160 / DSM 100696 / MI-1) (Desulfotomaculum reducens).